Here is a 262-residue protein sequence, read N- to C-terminus: Glucosamine-6-phosphate deaminase (262 aa).

Catalysis depends on aspartate 63, which acts as the Proton acceptor; for enolization step. Asparagine 129 serves as the catalytic For ring-opening step. Histidine 131 acts as the Proton acceptor; for ring-opening step in catalysis. Glutamate 136 functions as the For ring-opening step in the catalytic mechanism.

The protein belongs to the glucosamine/galactosamine-6-phosphate isomerase family. NagB subfamily.

The catalysed reaction is alpha-D-glucosamine 6-phosphate + H2O = beta-D-fructose 6-phosphate + NH4(+). It participates in amino-sugar metabolism; N-acetylneuraminate degradation; D-fructose 6-phosphate from N-acetylneuraminate: step 5/5. Functionally, catalyzes the reversible isomerization-deamination of glucosamine 6-phosphate (GlcN6P) to form fructose 6-phosphate (Fru6P) and ammonium ion. In Bacillus cereus (strain ZK / E33L), this protein is Glucosamine-6-phosphate deaminase.